The chain runs to 275 residues: NH(3)-dependent NAD(+) synthetase (275 aa).

47–54 is an ATP binding site; that stretch reads GISGGQDS. Asp-53 contacts Mg(2+). Arg-141 contacts deamido-NAD(+). An ATP-binding site is contributed by Thr-161. Glu-166 contacts Mg(2+). Residues Lys-174 and Asp-181 each coordinate deamido-NAD(+). Positions 190 and 212 each coordinate ATP. Residue 261-262 participates in deamido-NAD(+) binding; sequence HK.

Belongs to the NAD synthetase family. Homodimer.

The catalysed reaction is deamido-NAD(+) + NH4(+) + ATP = AMP + diphosphate + NAD(+) + H(+). It participates in cofactor biosynthesis; NAD(+) biosynthesis; NAD(+) from deamido-NAD(+) (ammonia route): step 1/1. Its function is as follows. Catalyzes the ATP-dependent amidation of deamido-NAD to form NAD. Uses ammonia as a nitrogen source. The sequence is that of NH(3)-dependent NAD(+) synthetase from Lacticaseibacillus casei (strain BL23) (Lactobacillus casei).